The chain runs to 433 residues: tRNA(Ile)-lysidine synthase (433 aa).

27–32 (SGGLDS) lines the ATP pocket.

It belongs to the tRNA(Ile)-lysidine synthase family.

The protein localises to the cytoplasm. The enzyme catalyses cytidine(34) in tRNA(Ile2) + L-lysine + ATP = lysidine(34) in tRNA(Ile2) + AMP + diphosphate + H(+). Its function is as follows. Ligates lysine onto the cytidine present at position 34 of the AUA codon-specific tRNA(Ile) that contains the anticodon CAU, in an ATP-dependent manner. Cytidine is converted to lysidine, thus changing the amino acid specificity of the tRNA from methionine to isoleucine. The sequence is that of tRNA(Ile)-lysidine synthase from Legionella pneumophila subsp. pneumophila (strain Philadelphia 1 / ATCC 33152 / DSM 7513).